Here is a 192-residue protein sequence, read N- to C-terminus: Adenylate kinase (192 aa).

Residue 12 to 17 coordinates ATP; sequence GSGKTT. Residues 34-63 form an NMP region; sequence STGDLLRAEVASGSELGKTIDSFISKGNLV. AMP is bound by residues Thr35, Arg40, 61 to 63, 88 to 91, and Gln95; these read NLV and GYPR. An LID region spans residues 130–136; sequence GRNRGAD. Arg131 is a binding site for ATP. AMP is bound by residues Arg133 and Arg145. Arg173 serves as a coordination point for ATP.

This sequence belongs to the adenylate kinase family. As to quaternary structure, monomer.

The protein localises to the cytoplasm. It catalyses the reaction AMP + ATP = 2 ADP. Its pathway is purine metabolism; AMP biosynthesis via salvage pathway; AMP from ADP: step 1/1. In terms of biological role, catalyzes the reversible transfer of the terminal phosphate group between ATP and AMP. Plays an important role in cellular energy homeostasis and in adenine nucleotide metabolism. The polypeptide is Adenylate kinase (Campylobacter jejuni subsp. jejuni serotype O:2 (strain ATCC 700819 / NCTC 11168)).